The sequence spans 250 residues: tRNA (guanine-N(1)-)-methyltransferase (250 aa).

S-adenosyl-L-methionine-binding positions include glycine 113 and 133-138 (VGDYVL).

It belongs to the RNA methyltransferase TrmD family. Homodimer.

The protein resides in the cytoplasm. The enzyme catalyses guanosine(37) in tRNA + S-adenosyl-L-methionine = N(1)-methylguanosine(37) in tRNA + S-adenosyl-L-homocysteine + H(+). Specifically methylates guanosine-37 in various tRNAs. This chain is tRNA (guanine-N(1)-)-methyltransferase, found in Proteus mirabilis (strain HI4320).